Here is a 198-residue protein sequence, read N- to C-terminus: Recombination protein RecR (198 aa).

The C4-type zinc-finger motif lies at 57–72; it reads CSICGNLTESDPCAIC. The 96-residue stretch at 80–175 folds into the Toprim domain; the sequence is TTILVVEESK…KVTRLARGLA (96 aa).

Belongs to the RecR family.

In terms of biological role, may play a role in DNA repair. It seems to be involved in an RecBC-independent recombinational process of DNA repair. It may act with RecF and RecO. The sequence is that of Recombination protein RecR from Lactococcus lactis subsp. lactis (strain IL1403) (Streptococcus lactis).